The primary structure comprises 185 residues: Ribosome-recycling factor (185 aa).

The protein belongs to the RRF family.

The protein resides in the cytoplasm. Functionally, responsible for the release of ribosomes from messenger RNA at the termination of protein biosynthesis. May increase the efficiency of translation by recycling ribosomes from one round of translation to another. This Coxiella burnetii (strain RSA 493 / Nine Mile phase I) protein is Ribosome-recycling factor.